Here is a 645-residue protein sequence, read N- to C-terminus: Homeobox protein B-H2 (645 aa).

6 disordered regions span residues M1–T50, S86–L134, R149–P176, S240–R259, M265–T385, and G553–V645. Residues S18–A29 are compositionally biased toward low complexity. The segment covering Q106 to Q121 has biased composition (basic residues). The segment covering Q122–L134 has biased composition (low complexity). The segment covering R149–S165 has biased composition (basic and acidic residues). The span at H244 to H253 shows a compositional bias: basic residues. Residues N275–G316 show a composition bias toward low complexity. The span at S317 to G328 shows a compositional bias: gly residues. Polar residues predominate over residues S329–I339. Positions S362–S377 are enriched in low complexity. Positions Q380–T439 form a DNA-binding region, homeobox. A compositionally biased stretch (low complexity) spans G553–A574. A compositionally biased stretch (polar residues) spans T583–I592. A Phosphothreonine modification is found at T593. The segment covering P594 to P603 has biased composition (pro residues). Residues S595 and S602 each carry the phosphoserine modification. Over residues D618 to E632 the composition is skewed to basic and acidic residues. Acidic residues predominate over residues R633–V645.

This sequence belongs to the Antp homeobox family. As to expression, B-H1 and B-H2 are abundant in the eye-antenna imaginal disk. Expressed in R1 and R6 cells throughout larval stage until 30 hours after puparium formation, at which time expression is seen in the anterior and posterior primary pigment cells. Coexpressed in embryonic glial cells, neurons of the CNS and PNS, most latitudinal anterior cells of the developing notum and the central circular region of the leg and antennal imaginal disk throughout larval development.

The protein localises to the nucleus. In terms of biological role, B-H1 and B-H2 are regulated by members of the wg signaling pathway; wg and dpp. B-H1 and B-H2 are coexpressed and functionally required in R1 and R6 receptor cells and primary pigment cells for normal eye development. Coexpression is also required for the fate determination of external sensory organs, formation of notal microchaetae, formation of presutural macrochaetae, antennal development and for distal leg morphogenesis; segmentation and specification of tarsal segments 3-5. In Drosophila melanogaster (Fruit fly), this protein is Homeobox protein B-H2 (B-H2).